We begin with the raw amino-acid sequence, 128 residues long: Large ribosomal subunit protein eL8 (128 aa).

This sequence belongs to the eukaryotic ribosomal protein eL8 family. In terms of assembly, part of the 50S ribosomal subunit. Probably part of the RNase P complex.

Its subcellular location is the cytoplasm. Multifunctional RNA-binding protein that recognizes the K-turn motif in ribosomal RNA, the RNA component of RNase P, box H/ACA, box C/D and box C'/D' sRNAs. The polypeptide is Large ribosomal subunit protein eL8 (Nitrosopumilus maritimus (strain SCM1)).